A 353-amino-acid chain; its full sequence is Peptide chain release factor 1 (353 aa).

Gln-230 is modified (N5-methylglutamine).

The protein belongs to the prokaryotic/mitochondrial release factor family. In terms of processing, methylated by PrmC. Methylation increases the termination efficiency of RF1.

The protein resides in the cytoplasm. In terms of biological role, peptide chain release factor 1 directs the termination of translation in response to the peptide chain termination codons UAG and UAA. The chain is Peptide chain release factor 1 from Gluconobacter oxydans (strain 621H) (Gluconobacter suboxydans).